The following is a 350-amino-acid chain: Sulfate-binding protein (350 aa).

The signal sequence occupies residues 1–40 (MKTAWTRRSFLQSAALATATVITIAACGGNNQSSSGGSGQ).

Belongs to the prokaryotic sulfate-binding protein family.

The protein localises to the periplasm. Functionally, this protein specifically binds sulfate and is involved in its transmembrane transport. This chain is Sulfate-binding protein (sbpA), found in Synechococcus elongatus (strain ATCC 33912 / PCC 7942 / FACHB-805) (Anacystis nidulans R2).